Consider the following 947-residue polypeptide: Translation initiation factor IF-2 (947 aa).

The segment at 55-361 is disordered; the sequence is TKDAQAGSAK…PVTERKFHEL (307 aa). Residues 63 to 73 are compositionally biased toward basic and acidic residues; that stretch reads AKDKQVAEQKA. Positions 76–90 are enriched in low complexity; sequence AKATTPQPAAATQEA. Basic and acidic residues-rich tracts occupy residues 103-116, 125-134, and 170-183; these read FKAE…EQAA, SNDRKSDYRQ, and NDGH…DKNR. Low complexity predominate over residues 190–204; it reads RQQDTGRQGQTQAGA. 3 stretches are compositionally biased toward basic and acidic residues: residues 225–249, 257–267, and 294–311; these read ARQR…RQEA, QTEDKKHREAS, and NRPD…DGQK. Positions 316–334 are enriched in low complexity; it reads SWNSQNQVRNQKNSNWNNN. Positions 335–345 are enriched in basic residues; the sequence is KKNKKGKHHKN. Residues 448-617 form the tr-type G domain; it reads ERAPVVTIMG…LLVAEVEELK (170 aa). The interval 457–464 is G1; that stretch reads GHVDHGKT. Residue 457–464 coordinates GTP; sequence GHVDHGKT. A G2 region spans residues 482 to 486; it reads GITQH. Residues 503-506 form a G3 region; that stretch reads DTPG. Residues 503 to 507 and 557 to 560 each bind GTP; these read DTPGH and NKID. The tract at residues 557–560 is G4; it reads NKID. The G5 stretch occupies residues 593–595; that stretch reads SAK.

The protein belongs to the TRAFAC class translation factor GTPase superfamily. Classic translation factor GTPase family. IF-2 subfamily.

Its subcellular location is the cytoplasm. Functionally, one of the essential components for the initiation of protein synthesis. Protects formylmethionyl-tRNA from spontaneous hydrolysis and promotes its binding to the 30S ribosomal subunits. Also involved in the hydrolysis of GTP during the formation of the 70S ribosomal complex. In Streptococcus equi subsp. zooepidemicus (strain MGCS10565), this protein is Translation initiation factor IF-2.